Here is a 182-residue protein sequence, read N- to C-terminus: Shikimate kinase (182 aa).

Gly14–Thr19 contacts ATP. Thr18 contributes to the Mg(2+) binding site. 3 residues coordinate substrate: Asp36, Arg60, and Gly84. Residue Arg122 coordinates ATP. A substrate-binding site is contributed by Arg141.

Belongs to the shikimate kinase family. As to quaternary structure, monomer. Mg(2+) serves as cofactor.

Its subcellular location is the cytoplasm. The catalysed reaction is shikimate + ATP = 3-phosphoshikimate + ADP + H(+). The protein operates within metabolic intermediate biosynthesis; chorismate biosynthesis; chorismate from D-erythrose 4-phosphate and phosphoenolpyruvate: step 5/7. In terms of biological role, catalyzes the specific phosphorylation of the 3-hydroxyl group of shikimic acid using ATP as a cosubstrate. The chain is Shikimate kinase from Marinomonas sp. (strain MWYL1).